We begin with the raw amino-acid sequence, 97 residues long: Co-chaperonin GroES (97 aa).

This sequence belongs to the GroES chaperonin family. As to quaternary structure, heptamer of 7 subunits arranged in a ring. Interacts with the chaperonin GroEL.

The protein resides in the cytoplasm. Functionally, together with the chaperonin GroEL, plays an essential role in assisting protein folding. The GroEL-GroES system forms a nano-cage that allows encapsulation of the non-native substrate proteins and provides a physical environment optimized to promote and accelerate protein folding. GroES binds to the apical surface of the GroEL ring, thereby capping the opening of the GroEL channel. This chain is Co-chaperonin GroES, found in Buchnera aphidicola subsp. Pterocomma populeum.